A 178-amino-acid chain; its full sequence is Large ribosomal subunit protein uL6 (178 aa).

This sequence belongs to the universal ribosomal protein uL6 family. Part of the 50S ribosomal subunit.

Functionally, this protein binds to the 23S rRNA, and is important in its secondary structure. It is located near the subunit interface in the base of the L7/L12 stalk, and near the tRNA binding site of the peptidyltransferase center. This chain is Large ribosomal subunit protein uL6, found in Micrococcus luteus (Micrococcus lysodeikticus).